We begin with the raw amino-acid sequence, 91 residues long: ATP synthase subunit c (91 aa).

2 consecutive transmembrane segments (helical) span residues 4–24 (FTMCMLAAGFGMAIGAFGTGI) and 53–73 (IGLAMIESLAIYVLVVCLIIL).

It belongs to the ATPase C chain family. In terms of assembly, F-type ATPases have 2 components, F(1) - the catalytic core - and F(0) - the membrane proton channel. F(1) has five subunits: alpha(3), beta(3), gamma(1), delta(1), epsilon(1). F(0) has three main subunits: a(1), b(2) and c(10-14). The alpha and beta chains form an alternating ring which encloses part of the gamma chain. F(1) is attached to F(0) by a central stalk formed by the gamma and epsilon chains, while a peripheral stalk is formed by the delta and b chains.

The protein localises to the cell inner membrane. Its function is as follows. F(1)F(0) ATP synthase produces ATP from ADP in the presence of a proton or sodium gradient. F-type ATPases consist of two structural domains, F(1) containing the extramembraneous catalytic core and F(0) containing the membrane proton channel, linked together by a central stalk and a peripheral stalk. During catalysis, ATP synthesis in the catalytic domain of F(1) is coupled via a rotary mechanism of the central stalk subunits to proton translocation. Key component of the F(0) channel; it plays a direct role in translocation across the membrane. A homomeric c-ring of between 10-14 subunits forms the central stalk rotor element with the F(1) delta and epsilon subunits. The protein is ATP synthase subunit c of Trichlorobacter lovleyi (strain ATCC BAA-1151 / DSM 17278 / SZ) (Geobacter lovleyi).